An 88-amino-acid polypeptide reads, in one-letter code: Putative membrane protein insertion efficiency factor (88 aa).

This sequence belongs to the UPF0161 family.

It localises to the cell inner membrane. Its function is as follows. Could be involved in insertion of integral membrane proteins into the membrane. The chain is Putative membrane protein insertion efficiency factor from Synechococcus sp. (strain CC9311).